Here is a 145-residue protein sequence, read N- to C-terminus: Protein SprT-like (145 aa).

One can recognise a SprT-like domain in the interval 5 to 141 (DYVREVSLAD…CGRCHGRLIK (137 aa)). H64 lines the Zn(2+) pocket. Residue E65 is part of the active site. H68 serves as a coordination point for Zn(2+).

It belongs to the SprT family. Requires Zn(2+) as cofactor.

The protein resides in the cytoplasm. The protein is Protein SprT-like of Streptococcus equi subsp. zooepidemicus (strain H70).